The primary structure comprises 465 residues: 3-isopropylmalate dehydratase large subunit (465 aa).

The [4Fe-4S] cluster site is built by cysteine 346, cysteine 406, and cysteine 409.

The protein belongs to the aconitase/IPM isomerase family. LeuC type 1 subfamily. In terms of assembly, heterodimer of LeuC and LeuD. [4Fe-4S] cluster is required as a cofactor.

The catalysed reaction is (2R,3S)-3-isopropylmalate = (2S)-2-isopropylmalate. The protein operates within amino-acid biosynthesis; L-leucine biosynthesis; L-leucine from 3-methyl-2-oxobutanoate: step 2/4. Functionally, catalyzes the isomerization between 2-isopropylmalate and 3-isopropylmalate, via the formation of 2-isopropylmaleate. In Leptospira interrogans serogroup Icterohaemorrhagiae serovar copenhageni (strain Fiocruz L1-130), this protein is 3-isopropylmalate dehydratase large subunit.